A 725-amino-acid polypeptide reads, in one-letter code: IML2-like protein YKR018C (725 aa).

Threonine 196 is subject to Phosphothreonine. A phosphoserine mark is found at serine 246, serine 377, and serine 380.

This sequence belongs to the IML2 family.

It is found in the cytoplasm. It localises to the nucleus. This Saccharomyces cerevisiae (strain ATCC 204508 / S288c) (Baker's yeast) protein is IML2-like protein YKR018C.